Here is a 320-residue protein sequence, read N- to C-terminus: MARKKIALIGSGMIGGTLAHMIGLKELGDVVLFDIEEGMPQGKALDIAESSPVDGFDVSLTGANVYEAIEGADVVIVTAGVARKPGMSRDDLLGINLKVMEQVGAGIKKYASSAFVICITNPLDAMVWALQKFSGLPKQKVVGMAGVLDSARFRYFLSKEFKVSVKDVTAFVLGGHGDSMVPLVRYSTVGGISLPDLVKMGWTTQEKIDQIIQRVRNGGAEIVGLLKTGSAFYAPAASAISMAEAYLKDIKRVVPVATYLSGEYGVKDTYVGVPVVLGAGGVERVIEIDLDKKERSAFEQSVNAVKKLCEACIAIAPCLK.

NAD(+) contacts are provided by residues 10–15 (GSGMIG) and Asp34. Substrate is bound by residues Arg83 and Arg89. Residues Asn96 and 119–121 (ITN) each bind NAD(+). Substrate contacts are provided by Asn121 and Arg152. Catalysis depends on His176, which acts as the Proton acceptor.

This sequence belongs to the LDH/MDH superfamily. MDH type 3 family.

The enzyme catalyses (S)-malate + NAD(+) = oxaloacetate + NADH + H(+). Its function is as follows. Catalyzes the reversible oxidation of malate to oxaloacetate. The sequence is that of Malate dehydrogenase from Bartonella quintana (strain Toulouse) (Rochalimaea quintana).